An 89-amino-acid polypeptide reads, in one-letter code: Elongation factor 1-beta (89 aa).

The protein belongs to the EF-1-beta/EF-1-delta family.

Promotes the exchange of GDP for GTP in EF-1-alpha/GDP, thus allowing the regeneration of EF-1-alpha/GTP that could then be used to form the ternary complex EF-1-alpha/GTP/AAtRNA. The protein is Elongation factor 1-beta of Methanosarcina mazei (strain ATCC BAA-159 / DSM 3647 / Goe1 / Go1 / JCM 11833 / OCM 88) (Methanosarcina frisia).